A 481-amino-acid chain; its full sequence is MARGLALILFSLLMVFGSAAHAEDDPIAALIQLNKQMIKSVKDGDMDSAQQTFDTFKAKWKKEEPSIKKENLSSHSEMDANIAMISLSFINQDARKLKTQLEELASHLETYQQAVVLKKTSSGQSRASLTAYIQSLKDTKQFIEKKQLDEASSAIDNLVTSWLAVEGDVVSQSKEAYTTSEENLALMKAEIGSHPEKVSKQIDEMIQLLEPIASSSYSWWDAALIPVREGMEALLVIGALLTMTKKARVTRSSTWIWGGASAGMAVSLAAGIGVTVLFSSSVFGENNFLLGGVTGVLSAVMLLYVGVWLHRNASMDKWREKINIQKSQALKKRSLLSFALIAFLAVVREGLETVIFFIGLVGKLPLTELIGGTAAGLIVLVIVGVLMIKLGMRIPLKPFFLLSMAVVLYMCVKFLGTGVHSLQLAGILPSDAESWLPSVSVLGIYPSVYSTIPQMLILLFLLIALVSEAAKHFTNGKELTK.

The signal sequence occupies residues Met-1–Ala-22. The next 6 membrane-spanning stretches (helical) occupy residues Gly-258–Phe-278, Phe-288–Trp-308, Phe-338–Ile-358, Glu-368–Ile-388, Phe-399–Val-419, and Pro-446–Val-466.

This sequence belongs to the oxidase-dependent Fe transporter (OFeT) (TC 9.A.10.1) family. In terms of assembly, component of the iron transporter efeUOB/M complex composed of EfeU, EfeM and EfeB; EfeU is essential for the complex formation.

Its subcellular location is the cell membrane. Its function is as follows. Part of the iron transporter system efeUOB/M involved in iron import. Mediates the uptake of Fe(3+) ions, delivered by EfeM, across the cell membrane. This is Iron permease EfeU (efeU) from Bacillus subtilis (strain 168).